An 87-amino-acid polypeptide reads, in one-letter code: uncharacterized protein (87 aa).

Residues 43–87 (NQGYGQNFGDASGFMGTRSHVDDRDQIDSPASFESEAVNSSIKRK) are disordered.

This is an uncharacterized protein from Bacillus subtilis (strain 168).